The primary structure comprises 202 residues: Nucleoid occlusion factor SlmA (202 aa).

The 62-residue stretch at 14 to 75 folds into the HTH tetR-type domain; it reads KERQQQVLEV…ALIERIEQTL (62 aa). Positions 38–57 form a DNA-binding region, H-T-H motif; that stretch reads TTERLAKAVGVSEGALYRYF.

The protein belongs to the nucleoid occlusion factor SlmA family. As to quaternary structure, homodimer. Interacts with FtsZ.

The protein resides in the cytoplasm. Its subcellular location is the nucleoid. Its function is as follows. Required for nucleoid occlusion (NO) phenomenon, which prevents Z-ring formation and cell division over the nucleoid. Acts as a DNA-associated cell division inhibitor that binds simultaneously chromosomal DNA and FtsZ, and disrupts the assembly of FtsZ polymers. SlmA-DNA-binding sequences (SBS) are dispersed on non-Ter regions of the chromosome, preventing FtsZ polymerization at these regions. The sequence is that of Nucleoid occlusion factor SlmA from Haemophilus ducreyi (strain 35000HP / ATCC 700724).